The following is a 234-amino-acid chain: Uridylate kinase (234 aa).

Residue 9-12 (KLSG) coordinates ATP. Residue G51 coordinates UMP. 2 residues coordinate ATP: G52 and R56. Residues D71 and 132–139 (CGNPFFTT) contribute to the UMP site. T159, Y165, and D168 together coordinate ATP.

The protein belongs to the UMP kinase family. Homohexamer.

The protein resides in the cytoplasm. The catalysed reaction is UMP + ATP = UDP + ADP. It participates in pyrimidine metabolism; CTP biosynthesis via de novo pathway; UDP from UMP (UMPK route): step 1/1. Its activity is regulated as follows. Inhibited by UTP. Catalyzes the reversible phosphorylation of UMP to UDP. This chain is Uridylate kinase, found in Prochlorococcus marinus (strain AS9601).